A 274-amino-acid chain; its full sequence is Malonyl-[acyl-carrier protein] O-methyltransferase (274 aa).

Belongs to the methyltransferase superfamily.

It carries out the reaction malonyl-[ACP] + S-adenosyl-L-methionine = malonyl-[ACP] methyl ester + S-adenosyl-L-homocysteine. Its pathway is cofactor biosynthesis; biotin biosynthesis. In terms of biological role, converts the free carboxyl group of a malonyl-thioester to its methyl ester by transfer of a methyl group from S-adenosyl-L-methionine (SAM). It allows to synthesize pimeloyl-ACP via the fatty acid synthetic pathway. This chain is Malonyl-[acyl-carrier protein] O-methyltransferase, found in Bacteroides helcogenes (strain ATCC 35417 / DSM 20613 / JCM 6297 / CCUG 15421 / P 36-108).